Consider the following 447-residue polypeptide: Na(+)-translocating NADH-quinone reductase subunit A (447 aa).

The protein belongs to the NqrA family. As to quaternary structure, composed of six subunits; NqrA, NqrB, NqrC, NqrD, NqrE and NqrF.

It carries out the reaction a ubiquinone + n Na(+)(in) + NADH + H(+) = a ubiquinol + n Na(+)(out) + NAD(+). In terms of biological role, NQR complex catalyzes the reduction of ubiquinone-1 to ubiquinol by two successive reactions, coupled with the transport of Na(+) ions from the cytoplasm to the periplasm. NqrA to NqrE are probably involved in the second step, the conversion of ubisemiquinone to ubiquinol. This Cellvibrio japonicus (strain Ueda107) (Pseudomonas fluorescens subsp. cellulosa) protein is Na(+)-translocating NADH-quinone reductase subunit A.